The primary structure comprises 1073 residues: Semaphorin-6D (1073 aa).

The first 20 residues, 1–20 (MRVFLLCAYILLLMVSQLRA), serve as a signal peptide directing secretion. Topologically, residues 21–662 (VSFPEDDEPL…GESNQMVHMN (642 aa)) are extracellular. One can recognise a Sema domain in the interval 27-512 (DEPLNTVDYH…FSSCIIRIPL (486 aa)). N-linked (GlcNAc...) asparagine glycosylation is present at N51. Cystine bridges form between C108–C118, C136–C145, C259–C370, and C284–C329. N-linked (GlcNAc...) asparagine glycosylation is present at N283. Residues N435 and N461 are each glycosylated (N-linked (GlcNAc...) asparagine). Intrachain disulfides connect C477–C506, C515–C533, C521–C568, and C525–C541. A PSI domain is found at 514–569 (RCERYGSCKKSCIASRDPYCGWLSQGSCGRVTPGMLAEGYEQDTEFGNTAHLGDCH). N-linked (GlcNAc...) asparagine glycosylation occurs at N631. The chain crosses the membrane as a helical span at residues 663–683 (VLITCVFAAFVLGAFIAGVAV). The Cytoplasmic portion of the chain corresponds to 684 to 1073 (YCYRDMFVRK…SVRPLNKYTY (390 aa)). Phosphoserine occurs at positions 723, 734, and 744. Disordered stretches follow at residues 744-775 (SRKE…PTPE), 787-825 (AMKS…GHIP), 839-874 (TSFS…RSVD), 914-1005 (SMSE…PTPT), and 1021-1073 (LQPS…KYTY). Position 773 is a phosphothreonine (T773). Residues 790-805 (SHSEKAHGHGASRKET) show a composition bias toward basic and acidic residues. A phosphoserine mark is found at S931, S957, and S983. A compositionally biased stretch (polar residues) spans 931–942 (SPPSTLPRNSPT). 2 stretches are compositionally biased toward polar residues: residues 980–995 (NLNS…QPSM) and 1021–1037 (LQPS…NGTL).

It belongs to the semaphorin family.

The protein localises to the cell membrane. Its subcellular location is the cytoplasm. In terms of biological role, shows growth cone collapsing activity on dorsal root ganglion (DRG) neurons in vitro. May be a stop signal for the DRG neurons in their target areas, and possibly also for other neurons. May also be involved in the maintenance and remodeling of neuronal connections. Ligand of TREM2 with PLXNA1 as coreceptor in dendritic cells, plays a role in the generation of immune responses and skeletal homeostasis. The protein is Semaphorin-6D of Homo sapiens (Human).